We begin with the raw amino-acid sequence, 205 residues long: Golgi apparatus membrane protein TVP23 homolog B (205 aa).

The residue at position 1 (Met1) is an N-acetylmethionine. Acidic residues predominate over residues 1-21 (MLSQDSNDDTEDVSLFDAEEE). Residues 1 to 27 (MLSQDSNDDTEDVSLFDAEEETTNRPR) form a disordered region. The next 4 helical transmembrane spans lie at 34–53 (PVAS…VYLL), 54–72 (CELL…ILLL), 126–146 (IFWL…FSAL), and 152–172 (KWLA…YGYI).

Belongs to the TVP23 family.

The protein localises to the membrane. The sequence is that of Golgi apparatus membrane protein TVP23 homolog B (Tvp23b) from Mus musculus (Mouse).